We begin with the raw amino-acid sequence, 273 residues long: Formamidopyrimidine-DNA glycosylase (273 aa).

The active-site Schiff-base intermediate with DNA is P2. E3 (proton donor) is an active-site residue. K58 (proton donor; for beta-elimination activity) is an active-site residue. DNA-binding residues include H92, R111, and K153. The segment at 238 to 272 (KVYGREGQSCLSCSSTIIKIKHSGRSTFYCKTCQY) adopts an FPG-type zinc-finger fold. The Proton donor; for delta-elimination activity role is filled by R262.

This sequence belongs to the FPG family. As to quaternary structure, monomer. It depends on Zn(2+) as a cofactor.

The enzyme catalyses Hydrolysis of DNA containing ring-opened 7-methylguanine residues, releasing 2,6-diamino-4-hydroxy-5-(N-methyl)formamidopyrimidine.. It carries out the reaction 2'-deoxyribonucleotide-(2'-deoxyribose 5'-phosphate)-2'-deoxyribonucleotide-DNA = a 3'-end 2'-deoxyribonucleotide-(2,3-dehydro-2,3-deoxyribose 5'-phosphate)-DNA + a 5'-end 5'-phospho-2'-deoxyribonucleoside-DNA + H(+). Its function is as follows. Involved in base excision repair of DNA damaged by oxidation or by mutagenic agents. Acts as a DNA glycosylase that recognizes and removes damaged bases. Has a preference for oxidized purines, such as 7,8-dihydro-8-oxoguanine (8-oxoG). Has AP (apurinic/apyrimidinic) lyase activity and introduces nicks in the DNA strand. Cleaves the DNA backbone by beta-delta elimination to generate a single-strand break at the site of the removed base with both 3'- and 5'-phosphates. This Rickettsia africae (strain ESF-5) protein is Formamidopyrimidine-DNA glycosylase.